The chain runs to 143 residues: Nucleoside diphosphate kinase (143 aa).

6 residues coordinate ATP: lysine 11, phenylalanine 59, arginine 87, threonine 93, arginine 104, and asparagine 114. Histidine 117 serves as the catalytic Pros-phosphohistidine intermediate.

Belongs to the NDK family. In terms of assembly, homotetramer. The cofactor is Mg(2+).

The protein localises to the cytoplasm. It catalyses the reaction a 2'-deoxyribonucleoside 5'-diphosphate + ATP = a 2'-deoxyribonucleoside 5'-triphosphate + ADP. The catalysed reaction is a ribonucleoside 5'-diphosphate + ATP = a ribonucleoside 5'-triphosphate + ADP. Major role in the synthesis of nucleoside triphosphates other than ATP. The ATP gamma phosphate is transferred to the NDP beta phosphate via a ping-pong mechanism, using a phosphorylated active-site intermediate. The sequence is that of Nucleoside diphosphate kinase from Erwinia tasmaniensis (strain DSM 17950 / CFBP 7177 / CIP 109463 / NCPPB 4357 / Et1/99).